The primary structure comprises 371 residues: Beta sliding clamp (371 aa).

This sequence belongs to the beta sliding clamp family. As to quaternary structure, forms a ring-shaped head-to-tail homodimer around DNA which binds and tethers DNA polymerases and other proteins to the DNA. The DNA replisome complex has a single clamp-loading complex (3 tau and 1 each of delta, delta', psi and chi subunits) which binds 3 Pol III cores (1 core on the leading strand and 2 on the lagging strand) each with a beta sliding clamp dimer. Additional proteins in the replisome are other copies of gamma, psi and chi, Ssb, DNA helicase and RNA primase.

The protein resides in the cytoplasm. Confers DNA tethering and processivity to DNA polymerases and other proteins. Acts as a clamp, forming a ring around DNA (a reaction catalyzed by the clamp-loading complex) which diffuses in an ATP-independent manner freely and bidirectionally along dsDNA. Initially characterized for its ability to contact the catalytic subunit of DNA polymerase III (Pol III), a complex, multichain enzyme responsible for most of the replicative synthesis in bacteria; Pol III exhibits 3'-5' exonuclease proofreading activity. The beta chain is required for initiation of replication as well as for processivity of DNA replication. This is Beta sliding clamp (dnaN) from Treponema pallidum (strain Nichols).